Reading from the N-terminus, the 52-residue chain is Alpha-crystallin B chain (52 aa).

Belongs to the small heat shock protein (HSP20) family. Homodimer. Aggregates with homologous proteins, including alpha-A-crystallin and the small heat shock protein HSPB1, to form large heteromeric complexes.

May contribute to the transparency and refractive index of the lens. This is Alpha-crystallin B chain (CRYAB) from Turdus merula (Common blackbird).